The chain runs to 195 residues: Cysteine/O-acetylserine efflux protein (195 aa).

At 1–7 the chain is on the periplasmic side; it reads MTPTLLS. A helical transmembrane segment spans residues 8–28; it reads AFWTYTLITAMTPGPNNILAL. At 29–46 the chain is on the cytoplasmic side; sequence SSATSHGFRQSTRVLAGM. A helical membrane pass occupies residues 47 to 67; the sequence is SLGFLIVMLLCAGISFSLAVI. The Periplasmic portion of the chain corresponds to 68–69; it reads DP. A helical membrane pass occupies residues 70–90; that stretch reads AAVHLLSWAGAAYIVWLAWKI. Residues 91–104 lie on the Cytoplasmic side of the membrane; the sequence is ATSPTKEDGLQTKP. A helical membrane pass occupies residues 105–125; sequence ISFWASFALQFVNVKIILYGV. The Periplasmic segment spans residues 126-141; it reads TALSTFVLPQTQALSW. A helical membrane pass occupies residues 142–162; the sequence is VVGVSVLLAMIGTFGNVCWAL. Residues 163–176 lie on the Cytoplasmic side of the membrane; that stretch reads AGHLFQRLFRQYGR. A helical transmembrane segment spans residues 177-194; that stretch reads QLNIVLALLLVYCAVRIF. Position 195 (Tyr195) is a topological domain, periplasmic.

It belongs to the Rht family.

It localises to the cell inner membrane. It catalyses the reaction O-acetyl-L-serine(in) = O-acetyl-L-serine(out). The enzyme catalyses L-cysteine(in) = L-cysteine(out). Functionally, exporter of O-acetylserine (OAS) and cysteine. The chain is Cysteine/O-acetylserine efflux protein (eamB) from Escherichia coli O1:K1 / APEC.